Consider the following 170-residue polypeptide: Adenine phosphoribosyltransferase (170 aa).

It belongs to the purine/pyrimidine phosphoribosyltransferase family. As to quaternary structure, homodimer.

The protein resides in the cytoplasm. The catalysed reaction is AMP + diphosphate = 5-phospho-alpha-D-ribose 1-diphosphate + adenine. It participates in purine metabolism; AMP biosynthesis via salvage pathway; AMP from adenine: step 1/1. Functionally, catalyzes a salvage reaction resulting in the formation of AMP, that is energically less costly than de novo synthesis. The sequence is that of Adenine phosphoribosyltransferase from Brevibacillus brevis (strain 47 / JCM 6285 / NBRC 100599).